The sequence spans 393 residues: NAD(P)H-quinone oxidoreductase subunit H, chloroplastic (393 aa).

This sequence belongs to the complex I 49 kDa subunit family. As to quaternary structure, NDH is composed of at least 16 different subunits, 5 of which are encoded in the nucleus.

The protein resides in the plastid. It is found in the chloroplast thylakoid membrane. It carries out the reaction a plastoquinone + NADH + (n+1) H(+)(in) = a plastoquinol + NAD(+) + n H(+)(out). It catalyses the reaction a plastoquinone + NADPH + (n+1) H(+)(in) = a plastoquinol + NADP(+) + n H(+)(out). Its function is as follows. NDH shuttles electrons from NAD(P)H:plastoquinone, via FMN and iron-sulfur (Fe-S) centers, to quinones in the photosynthetic chain and possibly in a chloroplast respiratory chain. The immediate electron acceptor for the enzyme in this species is believed to be plastoquinone. Couples the redox reaction to proton translocation, and thus conserves the redox energy in a proton gradient. The polypeptide is NAD(P)H-quinone oxidoreductase subunit H, chloroplastic (Anthoceros angustus (Hornwort)).